The primary structure comprises 1059 residues: DNA (cytosine-5)-methyltransferase CMT1 (1059 aa).

2 disordered regions span residues 1–196 (MVPE…GALA) and 230–272 (CVGE…DEAR). The segment covering 29-41 (AEAEAVADLDEID) has biased composition (acidic residues). 3 stretches are compositionally biased toward basic and acidic residues: residues 42-79 (REMSRAESRKRQRRTAKEKPGARKGATEWKPEDVEKAA), 92-129 (REMPRPELRKRQRRTAKEKPSAHEGATEWKPEDVEKAA), and 147-157 (SRGKRQRGVEK). Basic residues predominate over residues 158–167 (VKRRTRKKTA). Basic and acidic residues predominate over residues 252-262 (RRVEDSDDHFV). The BAH domain occupies 312 to 436 (EIYHLDDDVY…VAYSTFANLP (125 aa)). In terms of domain architecture, SAM-dependent MTase C5-type spans 479-1017 (ASLLDLYSGC…YALGLAYRGE (539 aa)). A Chromo domain is found at 584 to 649 (FDVEELLEIC…KGHKENILPL (66 aa)). Cysteine 662 is an active-site residue.

This sequence belongs to the class I-like SAM-binding methyltransferase superfamily. C5-methyltransferase family.

Its subcellular location is the nucleus. It carries out the reaction a 2'-deoxycytidine in DNA + S-adenosyl-L-methionine = a 5-methyl-2'-deoxycytidine in DNA + S-adenosyl-L-homocysteine + H(+). Functionally, involved in CpXpG DNA methylation. May not play a major role in maintaining CpXpG methylation. The protein is DNA (cytosine-5)-methyltransferase CMT1 of Oryza sativa subsp. japonica (Rice).